A 121-amino-acid polypeptide reads, in one-letter code: Large ribosomal subunit protein bL12 (121 aa).

It belongs to the bacterial ribosomal protein bL12 family. As to quaternary structure, homodimer. Part of the ribosomal stalk of the 50S ribosomal subunit. Forms a multimeric L10(L12)X complex, where L10 forms an elongated spine to which 2 to 4 L12 dimers bind in a sequential fashion. Binds GTP-bound translation factors.

In terms of biological role, forms part of the ribosomal stalk which helps the ribosome interact with GTP-bound translation factors. Is thus essential for accurate translation. In Oenococcus oeni (strain ATCC BAA-331 / PSU-1), this protein is Large ribosomal subunit protein bL12.